The sequence spans 670 residues: Acetyl-coenzyme A synthetase (670 aa).

Residues 211–214 and Thr-329 each bind CoA; that span reads RGGK. ATP-binding positions include 404 to 406, 428 to 433, Asp-519, and Arg-534; these read GEP and DTYWQT. Residue Ser-542 participates in CoA binding. Residue Arg-545 participates in ATP binding. Arg-603 is a CoA binding site.

It belongs to the ATP-dependent AMP-binding enzyme family.

The enzyme catalyses acetate + ATP + CoA = acetyl-CoA + AMP + diphosphate. This chain is Acetyl-coenzyme A synthetase (facA), found in Emericella nidulans (strain FGSC A4 / ATCC 38163 / CBS 112.46 / NRRL 194 / M139) (Aspergillus nidulans).